Reading from the N-terminus, the 194-residue chain is MTENSTSAPAAKPKRAKASKKSTDHPKYSDMVVAAIQAEKNRAGSSRQSIQKYIKSHYKVGENADSQIKLSIKRLVTTGVLKQTKGVGASGSFRLAKSDEPKKSVAFKKTKKEIKKVATPKKASKPKKAASKAPTKKPKATPVKKAKKKLAATPKKAKKPKTVKAKPVKASKPKKAKPVKPKAKSSAKRAGKKK.

At M1 the chain carries N-acetylmethionine. The span at 1-11 (MTENSTSAPAA) shows a compositional bias: low complexity. The tract at residues 1–29 (MTENSTSAPAAKPKRAKASKKSTDHPKYS) is disordered. Residue T2 is modified to N-acetylthreonine; in Histone H1.0, N-terminally processed. The H15 domain maps to 24-97 (DHPKYSDMVV…GASGSFRLAK (74 aa)). Citrulline is present on R42. Residues 84-194 (TKGVGASGSF…SSAKRAGKKK (111 aa)) are disordered. Position 104 is an ADP-ribosylserine (S104). A compositionally biased stretch (basic residues) spans 105 to 194 (VAFKKTKKEI…SSAKRAGKKK (90 aa)).

Belongs to the histone H1/H5 family. Post-translationally, ADP-ribosylated on Ser-104 in response to DNA damage.

The protein localises to the nucleus. It is found in the chromosome. In terms of biological role, histones H1 are necessary for the condensation of nucleosome chains into higher-order structures. The histones H1.0 are found in cells that are in terminal stages of differentiation or that have low rates of cell division. In Pongo abelii (Sumatran orangutan), this protein is Histone H1.0 (H1-0).